A 138-amino-acid polypeptide reads, in one-letter code: Cysteine desulfuration protein SufE (138 aa).

The active-site Cysteine persulfide intermediate is the cysteine 51.

This sequence belongs to the SufE family. As to quaternary structure, homodimer. Interacts with SufS.

It is found in the cytoplasm. It participates in cofactor biosynthesis; iron-sulfur cluster biosynthesis. Functionally, participates in cysteine desulfuration mediated by SufS. Cysteine desulfuration mobilizes sulfur from L-cysteine to yield L-alanine and constitutes an essential step in sulfur metabolism for biosynthesis of a variety of sulfur-containing biomolecules. Functions as a sulfur acceptor for SufS, by mediating the direct transfer of the sulfur atom from the S-sulfanylcysteine of SufS, an intermediate product of cysteine desulfuration process. The polypeptide is Cysteine desulfuration protein SufE (Escherichia coli (strain K12 / MC4100 / BW2952)).